A 356-amino-acid chain; its full sequence is S-adenosylmethionine:tRNA ribosyltransferase-isomerase (356 aa).

It belongs to the QueA family. As to quaternary structure, monomer.

It localises to the cytoplasm. It catalyses the reaction 7-aminomethyl-7-carbaguanosine(34) in tRNA + S-adenosyl-L-methionine = epoxyqueuosine(34) in tRNA + adenine + L-methionine + 2 H(+). Its pathway is tRNA modification; tRNA-queuosine biosynthesis. In terms of biological role, transfers and isomerizes the ribose moiety from AdoMet to the 7-aminomethyl group of 7-deazaguanine (preQ1-tRNA) to give epoxyqueuosine (oQ-tRNA). This is S-adenosylmethionine:tRNA ribosyltransferase-isomerase from Escherichia coli O1:K1 / APEC.